A 204-amino-acid polypeptide reads, in one-letter code: GATA transcription factor 14 (204 aa).

A compositionally biased stretch (basic and acidic residues) spans 57–66 (REFDTNDSKP). The segment at 57 to 102 (REFDTNDSKPSRNFSNLPTATRGRLHAPKRSGNKRGRQKRLSFKSP) is disordered. Residues 79–98 (GRLHAPKRSGNKRGRQKRLS) are compositionally biased toward basic residues. Residues 111–165 (GITDKSCSHCGTRKTPLWREGPRGAGTLCNACGMRYRTGRLLPEYRPASSPDFKP) form a GATA-type zinc finger. The segment at 180-204 (RERKSSPPNSFGFSESYHSTRKLGF) is disordered. Over residues 185–196 (SPPNSFGFSESY) the composition is skewed to polar residues.

The protein belongs to the type IV zinc-finger family. Class A subfamily.

It localises to the nucleus. In terms of biological role, transcriptional activator that specifically binds 5'-GATA-3' or 5'-GAT-3' motifs within gene promoters. May be involved in the regulation of some light-responsive genes. This Arabidopsis thaliana (Mouse-ear cress) protein is GATA transcription factor 14 (GATA14).